The primary structure comprises 150 residues: Siroheme decarboxylase NirD subunit (150 aa).

This sequence belongs to the Ahb/Nir family. Probably forms a complex composed of NirD, NirL, NirG and NirH. All proteins are required for the total conversion of siroheme to didecarboxysiroheme.

The catalysed reaction is siroheme + 2 H(+) = 12,18-didecarboxysiroheme + 2 CO2. The protein operates within porphyrin-containing compound metabolism. Its function is as follows. Involved in heme d1 biosynthesis. Catalyzes the decarboxylation of siroheme into didecarboxysiroheme. The sequence is that of Siroheme decarboxylase NirD subunit from Pseudomonas aeruginosa (strain ATCC 15692 / DSM 22644 / CIP 104116 / JCM 14847 / LMG 12228 / 1C / PRS 101 / PAO1).